Consider the following 477-residue polypeptide: Ubiquinone biosynthesis monooxygenase COQ6, mitochondrial (477 aa).

A mitochondrion-targeting transit peptide spans 1-25; that stretch reads MLGVLRIQGALASAGQARLLSVRLL.

This sequence belongs to the UbiH/COQ6 family. As to quaternary structure, component of a multi-subunit COQ enzyme complex. FAD serves as cofactor.

The protein resides in the mitochondrion inner membrane. It carries out the reaction a 4-hydroxy-3-(all-trans-polyprenyl)benzoate + 2 reduced [2Fe-2S]-[ferredoxin] + O2 + 2 H(+) = a 3,4-dihydroxy-5-(all-trans-polyprenyl)benzoate + 2 oxidized [2Fe-2S]-[ferredoxin] + H2O. The catalysed reaction is a 2-methoxy-6-(all-trans-polyprenyl)phenol + 2 reduced [2Fe-2S]-[ferredoxin] + O2 + 2 H(+) = a 2-methoxy-6-(all-trans-polyprenyl)benzene-1,4-diol + 2 oxidized [2Fe-2S]-[ferredoxin] + H2O. It functions in the pathway cofactor biosynthesis; ubiquinone biosynthesis. Its function is as follows. FAD-dependent monooxygenase required for two non-consecutive steps during ubiquinone biosynthesis. Required for the C5-ring hydroxylation during ubiquinone biosynthesis by catalyzing the hydroxylation of 4-hydroxy-3-(all-trans-polyprenyl)benzoic acid to 3,4-dihydroxy-5-(all-trans-polyprenyl)benzoic acid. Also acts downstream of coq4, for the C1-hydroxylation during ubiquinone biosynthesis by catalyzing the hydroxylation of 2-methoxy-6-(all-trans-polyprenyl)phenol to 2-methoxy-6-(all-trans-polyprenyl)benzene-1,4-diol. The electrons required for the hydroxylation reaction are funneled indirectly to Coq6 from NADPH via a ferredoxin/ferredoxin reductase system. The protein is Ubiquinone biosynthesis monooxygenase COQ6, mitochondrial of Drosophila melanogaster (Fruit fly).